A 283-amino-acid chain; its full sequence is Diaminopimelate epimerase (283 aa).

Residues Asn-11 and Asn-65 each coordinate substrate. The active-site Proton donor is the Cys-74. Residues 75–76, Asn-163, Asn-196, and 214–215 contribute to the substrate site; these read GN and ER. The Proton acceptor role is filled by Cys-223. Residue 224–225 coordinates substrate; that stretch reads GT.

It belongs to the diaminopimelate epimerase family. As to quaternary structure, homodimer.

It localises to the cytoplasm. The enzyme catalyses (2S,6S)-2,6-diaminopimelate = meso-2,6-diaminopimelate. The protein operates within amino-acid biosynthesis; L-lysine biosynthesis via DAP pathway; DL-2,6-diaminopimelate from LL-2,6-diaminopimelate: step 1/1. Catalyzes the stereoinversion of LL-2,6-diaminopimelate (L,L-DAP) to meso-diaminopimelate (meso-DAP), a precursor of L-lysine and an essential component of the bacterial peptidoglycan. In Desulfitobacterium hafniense (strain DSM 10664 / DCB-2), this protein is Diaminopimelate epimerase.